The sequence spans 428 residues: Maltoporin 1 (428 aa).

An N-terminal signal peptide occupies residues 1–25; that stretch reads MTMKVKLLTTSVALALSMTAFSSNA.

This sequence belongs to the porin LamB (TC 1.B.3) family. Homotrimer formed of three 18-stranded antiparallel beta-barrels, containing three independent channels.

It localises to the cell outer membrane. The catalysed reaction is beta-maltose(in) = beta-maltose(out). Involved in the transport of maltose and maltodextrins. The protein is Maltoporin 1 of Aeromonas salmonicida (strain A449).